The sequence spans 355 residues: Phosphoribosylformylglycinamidine cyclo-ligase (355 aa).

It belongs to the AIR synthase family.

Its subcellular location is the cytoplasm. The enzyme catalyses 2-formamido-N(1)-(5-O-phospho-beta-D-ribosyl)acetamidine + ATP = 5-amino-1-(5-phospho-beta-D-ribosyl)imidazole + ADP + phosphate + H(+). The protein operates within purine metabolism; IMP biosynthesis via de novo pathway; 5-amino-1-(5-phospho-D-ribosyl)imidazole from N(2)-formyl-N(1)-(5-phospho-D-ribosyl)glycinamide: step 2/2. The chain is Phosphoribosylformylglycinamidine cyclo-ligase from Beijerinckia indica subsp. indica (strain ATCC 9039 / DSM 1715 / NCIMB 8712).